Consider the following 78-residue polypeptide: Acyl carrier protein (78 aa).

A Carrier domain is found at 2–77 (STIEERVKKI…AAIDFINANQ (76 aa)). Serine 37 is modified (O-(pantetheine 4'-phosphoryl)serine).

It belongs to the acyl carrier protein (ACP) family. 4'-phosphopantetheine is transferred from CoA to a specific serine of apo-ACP by AcpS. This modification is essential for activity because fatty acids are bound in thioester linkage to the sulfhydryl of the prosthetic group.

It localises to the cytoplasm. It functions in the pathway lipid metabolism; fatty acid biosynthesis. Carrier of the growing fatty acid chain in fatty acid biosynthesis. The protein is Acyl carrier protein of Yersinia pseudotuberculosis serotype O:1b (strain IP 31758).